A 96-amino-acid chain; its full sequence is uncharacterized protein (96 aa).

The chain crosses the membrane as a helical span at residues 13–35; it reads PVVRYVVALLHWLLWRVVVIIAI.

Its subcellular location is the membrane. This is an uncharacterized protein from Archaeoglobus fulgidus (strain ATCC 49558 / DSM 4304 / JCM 9628 / NBRC 100126 / VC-16).